A 1491-amino-acid chain; its full sequence is Chromosome partition protein MukB (1491 aa).

34 to 41 contributes to the ATP binding site; it reads GGNGAGKS. Coiled-coil stretches lie at residues 302–418, 488–600, 638–666, 781–806, 836–1109, and 1210–1239; these read LIEQ…QYQQ, EVAR…RFES, ELEKAQSMAKDKLAERRAKLDSEIERLAS, RAAREQRLELLREERDDVVEQHAKAS, EQAL…DLRT, and VEAIEEMEVELARLTEELTQREQRLAISSD. The segment at 667–784 is flexible hinge; the sequence is PGGSNDPRLK…AIPLFGRAAR (118 aa). A disordered region spans residues 1059-1080; sequence QRRRDELQERLHTSRSRKSEYE.

Belongs to the SMC family. MukB subfamily. In terms of assembly, homodimerization via its hinge domain. Binds to DNA via its C-terminal region. Interacts, and probably forms a ternary complex, with MukE and MukF via its C-terminal region. The complex formation is stimulated by calcium or magnesium. Interacts with tubulin-related protein FtsZ.

Its subcellular location is the cytoplasm. It localises to the nucleoid. Plays a central role in chromosome condensation, segregation and cell cycle progression. Functions as a homodimer, which is essential for chromosome partition. Involved in negative DNA supercoiling in vivo, and by this means organize and compact chromosomes. May achieve or facilitate chromosome segregation by condensation DNA from both sides of a centrally located replisome during cell division. In Vibrio cholerae serotype O1 (strain ATCC 39541 / Classical Ogawa 395 / O395), this protein is Chromosome partition protein MukB.